The following is an 879-amino-acid chain: Metabotropic glutamate receptor 3 (879 aa).

Residues 1–22 (MKMLTRLQVLMLALFSKGFLVS) form the signal peptide. The Extracellular portion of the chain corresponds to 23–576 (LGDHNFMRRE…EDYIRWEDAW (554 aa)). Cysteine 57 and cysteine 99 are oxidised to a cystine. Residues serine 151 and 172–174 (AST) contribute to the L-glutamate site. Residue asparagine 209 is glycosylated (N-linked (GlcNAc...) asparagine). Residue tyrosine 222 participates in L-glutamate binding. Cystine bridges form between cysteine 240–cysteine 527, cysteine 361–cysteine 373, cysteine 412–cysteine 419, cysteine 509–cysteine 528, cysteine 513–cysteine 531, cysteine 534–cysteine 546, and cysteine 549–cysteine 562. N-linked (GlcNAc...) asparagine glycosylation is present at asparagine 292. Aspartate 301 contacts L-glutamate. Lysine 389 is an L-glutamate binding site. N-linked (GlcNAc...) asparagine glycosylation is found at asparagine 414 and asparagine 439. A helical membrane pass occupies residues 577-599 (AIGPVTIACLGFMCTCIVITVFI). Over 600 to 613 (KHNNTPLVKASGRE) the chain is Cytoplasmic. The helical transmembrane segment at 614 to 634 (LCYILLFGVSLSYCMTFFFIA) threads the bilayer. The Extracellular segment spans residues 635 to 645 (KPSPVICALRR). A helical transmembrane segment spans residues 646–664 (LGLGTSFAICYSALLTKTN). Residues 665–688 (CIARIFDGVKNGAQRPKFISPSSQ) are Cytoplasmic-facing. The helical transmembrane segment at 689–709 (VFICLGLILVQIVMVSVWLIL) threads the bilayer. Residues 710–734 (ETPGTRRYTLPEKRETVILKCNVKD) lie on the Extracellular side of the membrane. A helical membrane pass occupies residues 735–756 (SSMLISLTYDVVLVILCTVYAF). Residues 757 to 769 (KTRKCPENFNEAK) are Cytoplasmic-facing. A helical transmembrane segment spans residues 770–792 (FIGFTMYTTCIIWLAFLPIFYVT). The Extracellular segment spans residues 793–802 (SSDYRVQTTT). Residues 803–828 (MCISVSLSGFVVLGCLFAPKVHIVLF) traverse the membrane as a helical segment. The Cytoplasmic segment spans residues 829–879 (QPQKNVVTHRLHLNRFSVSGTATTYSQSSASTYVPTVCNGREVLDSTTSSL).

Belongs to the G-protein coupled receptor 3 family. As to quaternary structure, interacts with TAMALIN.

The protein localises to the cell membrane. In terms of biological role, G-protein coupled receptor for glutamate. Ligand binding causes a conformation change that triggers signaling via guanine nucleotide-binding proteins (G proteins) and modulates the activity of down-stream effectors. Signaling inhibits adenylate cyclase activity. The polypeptide is Metabotropic glutamate receptor 3 (Grm3) (Mus musculus (Mouse)).